Here is a 372-residue protein sequence, read N- to C-terminus: Cytochrome b (372 aa).

A run of 4 helical transmembrane segments spans residues 25 to 45, 69 to 90, 105 to 125, and 170 to 190; these read FGSMLLTCLALQISTGFFLAI, WTMQNLHAIGASMFFICIYIHI, WLSGTVLLITLMATAFFGYVL, and FFALHFILPFLIVSLSSIHII. Heme b is bound by residues histidine 75 and histidine 89. Residues histidine 174 and histidine 188 each contribute to the heme b site. Histidine 193 contacts a ubiquinone. Transmembrane regions (helical) follow at residues 218 to 238, 280 to 300, 312 to 332, and 339 to 358; these read YKDILMITVMITTLFSIMAFA, LGGTLALLMSVIILTTAPFTH, LAQMLFWTLIATFITITWTAT, and FILISQMASIIYFSFFIINP.

The protein belongs to the cytochrome b family. In terms of assembly, the cytochrome bc1 complex contains 3 respiratory subunits (MT-CYB, CYC1 and UQCRFS1), 2 core proteins (UQCRC1 and UQCRC2) and probably 6 low-molecular weight proteins. Heme b is required as a cofactor.

The protein localises to the mitochondrion inner membrane. Component of the ubiquinol-cytochrome c reductase complex (complex III or cytochrome b-c1 complex) that is part of the mitochondrial respiratory chain. The b-c1 complex mediates electron transfer from ubiquinol to cytochrome c. Contributes to the generation of a proton gradient across the mitochondrial membrane that is then used for ATP synthesis. The protein is Cytochrome b (MT-CYB) of Acanthophis antarcticus (Common death adder).